The sequence spans 638 residues: Zinc finger protein 143 (638 aa).

M1 is subject to N-acetylmethionine. A Glycyl lysine isopeptide (Lys-Gly) (interchain with G-Cter in SUMO2) cross-link involves residue K213. 4 consecutive C2H2-type zinc fingers follow at residues 237 to 261 (FRCE…ERSH), 267 to 291 (YQCE…VRTH), 297 to 321 (YRCS…IRTH), and 327 to 351 (FKCP…VRTH). T352 carries the post-translational modification Phosphothreonine. C2H2-type zinc fingers lie at residues 357–381 (YYCT…VRIH), 387–411 (YVCT…HVVH), and 417–440 (YNCN…RTAH). A Glycyl lysine isopeptide (Lys-Gly) (interchain with G-Cter in SUMO2) cross-link involves residue K406.

It belongs to the GLI C2H2-type zinc-finger protein family. Interacts with CHD8. Forms a complex with HCFC1 and ZNF143. As to expression, expressed in all tissues tested, with the strongest expression in ovary.

It localises to the nucleus. Functionally, transcriptional activator. Activates the gene for selenocysteine tRNA (tRNAsec). Binds to the SPH motif of small nuclear RNA (snRNA) gene promoters. Participates in efficient U6 RNA polymerase III transcription via its interaction with CHD8. In complex with HCFC1 and ZNF143, regulates the expression of several genes, including AP2S1, ESCO2, OPHN1, RBL1, UBXN8 and ZNF32. The protein is Zinc finger protein 143 (ZNF143) of Homo sapiens (Human).